Here is a 115-residue protein sequence, read N- to C-terminus: uncharacterized protein (115 aa).

This is an uncharacterized protein from Human cytomegalovirus (strain AD169) (HHV-5).